A 537-amino-acid polypeptide reads, in one-letter code: CTP synthase (537 aa).

The interval 1 to 268 (MNTKYIFVTG…DNLVCKKLKL (268 aa)) is amidoligase domain. S14 lines the CTP pocket. S14 contacts UTP. 15–20 (SLGKGI) lines the ATP pocket. Position 55 (Y55) interacts with L-glutamine. Residue D72 coordinates ATP. Mg(2+) contacts are provided by D72 and E142. Residues 149–151 (DIE), 189–194 (KTKPTQ), and K225 contribute to the CTP site. Residues 189–194 (KTKPTQ) and K225 contribute to the UTP site. The Glutamine amidotransferase type-1 domain maps to 293–535 (NIALVGKYVE…IKASLNSKHK (243 aa)). G355 is an L-glutamine binding site. Residue C382 is the Nucleophile; for glutamine hydrolysis of the active site. Residues 383–386 (LGMQ), E406, and R463 contribute to the L-glutamine site. Catalysis depends on residues H508 and E510.

Belongs to the CTP synthase family. As to quaternary structure, homotetramer.

The enzyme catalyses UTP + L-glutamine + ATP + H2O = CTP + L-glutamate + ADP + phosphate + 2 H(+). It catalyses the reaction L-glutamine + H2O = L-glutamate + NH4(+). It carries out the reaction UTP + NH4(+) + ATP = CTP + ADP + phosphate + 2 H(+). It functions in the pathway pyrimidine metabolism; CTP biosynthesis via de novo pathway; CTP from UDP: step 2/2. Allosterically activated by GTP, when glutamine is the substrate; GTP has no effect on the reaction when ammonia is the substrate. The allosteric effector GTP functions by stabilizing the protein conformation that binds the tetrahedral intermediate(s) formed during glutamine hydrolysis. Inhibited by the product CTP, via allosteric rather than competitive inhibition. Catalyzes the ATP-dependent amination of UTP to CTP with either L-glutamine or ammonia as the source of nitrogen. Regulates intracellular CTP levels through interactions with the four ribonucleotide triphosphates. This is CTP synthase from Clostridium kluyveri (strain ATCC 8527 / DSM 555 / NBRC 12016 / NCIMB 10680 / K1).